The primary structure comprises 544 residues: CTP synthase (544 aa).

The segment at 1-265 is amidoligase domain; that stretch reads MTKFIFVTGG…DNIITEQLQL (265 aa). A CTP-binding site is contributed by Ser-13. Ser-13 serves as a coordination point for UTP. ATP-binding positions include 14-19 and Asp-71; that span reads SLGKGI. Asp-71 and Glu-139 together coordinate Mg(2+). Residues 146 to 148, 186 to 191, and Lys-222 contribute to the CTP site; these read DIE and KTKPTQ. UTP-binding positions include 186 to 191 and Lys-222; that span reads KTKPTQ. One can recognise a Glutamine amidotransferase type-1 domain in the interval 290-544; the sequence is KIAMVGKYVD…VKAALNNKKA (255 aa). Residue Gly-353 participates in L-glutamine binding. The active-site Nucleophile; for glutamine hydrolysis is Cys-380. L-glutamine-binding positions include 381–384, Glu-404, and Arg-471; that span reads LGMQ. Residues His-517 and Glu-519 contribute to the active site.

This sequence belongs to the CTP synthase family. As to quaternary structure, homotetramer.

The catalysed reaction is UTP + L-glutamine + ATP + H2O = CTP + L-glutamate + ADP + phosphate + 2 H(+). It catalyses the reaction L-glutamine + H2O = L-glutamate + NH4(+). It carries out the reaction UTP + NH4(+) + ATP = CTP + ADP + phosphate + 2 H(+). The protein operates within pyrimidine metabolism; CTP biosynthesis via de novo pathway; CTP from UDP: step 2/2. Its activity is regulated as follows. Allosterically activated by GTP, when glutamine is the substrate; GTP has no effect on the reaction when ammonia is the substrate. The allosteric effector GTP functions by stabilizing the protein conformation that binds the tetrahedral intermediate(s) formed during glutamine hydrolysis. Inhibited by the product CTP, via allosteric rather than competitive inhibition. Its function is as follows. Catalyzes the ATP-dependent amination of UTP to CTP with either L-glutamine or ammonia as the source of nitrogen. Regulates intracellular CTP levels through interactions with the four ribonucleotide triphosphates. In Neisseria meningitidis serogroup C (strain 053442), this protein is CTP synthase.